Here is a 79-residue protein sequence, read N- to C-terminus: U1-plectoxin-Pt1c (79 aa).

An N-terminal signal peptide occupies residues 1–18; sequence HLILASALICALVVCTFA. Positions 19-31 are excised as a propeptide; it reads EEQVNVPFLPDER. 5 cysteine pairs are disulfide-bonded: cysteine 35–cysteine 49, cysteine 42–cysteine 55, cysteine 48–cysteine 66, cysteine 52–cysteine 75, and cysteine 57–cysteine 64. A propeptide spanning residues 78-79 is cleaved from the precursor; the sequence is RR.

Belongs to the neurotoxin 02 (plectoxin) family. 02 (plectoxin) subfamily. As to expression, expressed by the venom gland.

It localises to the secreted. Functionally, potent toxin that may paralyze and/or kill insect pests such as H.virescens (lepidoptera), S.exigua (beet armyworm) and M.sexta (tobacco hornworm). The chain is U1-plectoxin-Pt1c from Plectreurys tristis (Spider).